A 449-amino-acid polypeptide reads, in one-letter code: MTVIPNVSIDALKNHVGETVRVNAWLTDKSGKGKLQFLKLRDGSGFVQATVFKGDVPEEVFEAARRLSQEQAVRVTGEVRADERAPGGVELAVRDLVPFAANQAEYPITPKEHGIEFLLDHRHLWLRHRRPWAILRVRDCVERAIVEFFHQEGFIRFDAPFFTPNAAEGTTELFEIDLFGEDKAYLSQTGQLHAEAGALAFGKVYTFGPTFRAEKSKTRRHLLEFWMVEPEVAPATHQDNMDLQERLVSFLVRRVLEECAAELAVLGRDVAKLQPAAEGNYPRVTYTEALDIIRRHIAEGDLPPNVQPDVQPVEWGDDLGAPHETILGFHFDRPVIVERYPAAIKAFYMQPDPADPRLALCDDMIAPEGYGEIIGGSERIHDYTLLKARIEGEGLPLSAFDWYLDLRRFGSVPHAGFGMGLERVIAWITGIDHIREAIPFPRMLTRMVP.

The protein belongs to the class-II aminoacyl-tRNA synthetase family. Homodimer.

Its subcellular location is the cytoplasm. It catalyses the reaction tRNA(Asn) + L-asparagine + ATP = L-asparaginyl-tRNA(Asn) + AMP + diphosphate + H(+). This chain is Asparagine--tRNA ligase, found in Deinococcus geothermalis (strain DSM 11300 / CIP 105573 / AG-3a).